The sequence spans 513 residues: ATP synthase subunit alpha (513 aa).

170 to 177 (GDRQTGKT) is a binding site for ATP.

The protein belongs to the ATPase alpha/beta chains family. F-type ATPases have 2 components, CF(1) - the catalytic core - and CF(0) - the membrane proton channel. CF(1) has five subunits: alpha(3), beta(3), gamma(1), delta(1), epsilon(1). CF(0) has three main subunits: a(1), b(2) and c(9-12). The alpha and beta chains form an alternating ring which encloses part of the gamma chain. CF(1) is attached to CF(0) by a central stalk formed by the gamma and epsilon chains, while a peripheral stalk is formed by the delta and b chains.

It is found in the cell inner membrane. The catalysed reaction is ATP + H2O + 4 H(+)(in) = ADP + phosphate + 5 H(+)(out). Functionally, produces ATP from ADP in the presence of a proton gradient across the membrane. The alpha chain is a regulatory subunit. The polypeptide is ATP synthase subunit alpha (Teredinibacter turnerae (strain ATCC 39867 / T7901)).